The primary structure comprises 422 residues: Serine--tRNA ligase (422 aa).

229–231 (TAE) is a binding site for L-serine. 260–262 (RKE) contacts ATP. Glu283 contacts L-serine. 347 to 350 (EISS) contacts ATP. Ser383 serves as a coordination point for L-serine.

The protein belongs to the class-II aminoacyl-tRNA synthetase family. Type-1 seryl-tRNA synthetase subfamily. As to quaternary structure, homodimer. The tRNA molecule binds across the dimer.

The protein resides in the cytoplasm. It carries out the reaction tRNA(Ser) + L-serine + ATP = L-seryl-tRNA(Ser) + AMP + diphosphate + H(+). It catalyses the reaction tRNA(Sec) + L-serine + ATP = L-seryl-tRNA(Sec) + AMP + diphosphate + H(+). It functions in the pathway aminoacyl-tRNA biosynthesis; selenocysteinyl-tRNA(Sec) biosynthesis; L-seryl-tRNA(Sec) from L-serine and tRNA(Sec): step 1/1. In terms of biological role, catalyzes the attachment of serine to tRNA(Ser). Is also able to aminoacylate tRNA(Sec) with serine, to form the misacylated tRNA L-seryl-tRNA(Sec), which will be further converted into selenocysteinyl-tRNA(Sec). In Natranaerobius thermophilus (strain ATCC BAA-1301 / DSM 18059 / JW/NM-WN-LF), this protein is Serine--tRNA ligase.